We begin with the raw amino-acid sequence, 258 residues long: Imidazole glycerol phosphate synthase subunit HisF (258 aa).

Catalysis depends on residues D11 and D130.

The protein belongs to the HisA/HisF family. As to quaternary structure, heterodimer of HisH and HisF.

Its subcellular location is the cytoplasm. The enzyme catalyses 5-[(5-phospho-1-deoxy-D-ribulos-1-ylimino)methylamino]-1-(5-phospho-beta-D-ribosyl)imidazole-4-carboxamide + L-glutamine = D-erythro-1-(imidazol-4-yl)glycerol 3-phosphate + 5-amino-1-(5-phospho-beta-D-ribosyl)imidazole-4-carboxamide + L-glutamate + H(+). Its pathway is amino-acid biosynthesis; L-histidine biosynthesis; L-histidine from 5-phospho-alpha-D-ribose 1-diphosphate: step 5/9. Functionally, IGPS catalyzes the conversion of PRFAR and glutamine to IGP, AICAR and glutamate. The HisF subunit catalyzes the cyclization activity that produces IGP and AICAR from PRFAR using the ammonia provided by the HisH subunit. This is Imidazole glycerol phosphate synthase subunit HisF from Sodalis glossinidius (strain morsitans).